Reading from the N-terminus, the 510-residue chain is Probable mannosyl-oligosaccharide alpha-1,2-mannosidase 1B (510 aa).

Residues 1–21 form the signal peptide; that stretch reads MHFSSLSLPLTALSLVTPSLA. Residues Asn35, Asn95, Asn182, and Asn249 are each glycosylated (N-linked (GlcNAc...) asparagine). A disulfide bond links Cys332 and Cys361. The N-linked (GlcNAc...) asparagine glycan is linked to Asn366. The active-site Proton donor is Glu375. Residue Thr501 coordinates Ca(2+).

Belongs to the glycosyl hydrolase 47 family. Monomer. Ca(2+) serves as cofactor. It depends on Mg(2+) as a cofactor.

Its subcellular location is the cytoplasmic vesicle lumen. The enzyme catalyses N(4)-(alpha-D-Man-(1-&gt;2)-alpha-D-Man-(1-&gt;2)-alpha-D-Man-(1-&gt;3)-[alpha-D-Man-(1-&gt;2)-alpha-D-Man-(1-&gt;3)-[alpha-D-Man-(1-&gt;2)-alpha-D-Man-(1-&gt;6)]-alpha-D-Man-(1-&gt;6)]-beta-D-Man-(1-&gt;4)-beta-D-GlcNAc-(1-&gt;4)-beta-D-GlcNAc)-L-asparaginyl-[protein] (N-glucan mannose isomer 9A1,2,3B1,2,3) + 4 H2O = N(4)-(alpha-D-Man-(1-&gt;3)-[alpha-D-Man-(1-&gt;3)-[alpha-D-Man-(1-&gt;6)]-alpha-D-Man-(1-&gt;6)]-beta-D-Man-(1-&gt;4)-beta-D-GlcNAc-(1-&gt;4)-beta-D-GlcNAc)-L-asparaginyl-[protein] (N-glucan mannose isomer 5A1,2) + 4 beta-D-mannose. The catalysed reaction is N(4)-(alpha-D-Man-(1-&gt;2)-alpha-D-Man-(1-&gt;2)-alpha-D-Man-(1-&gt;3)-[alpha-D-Man-(1-&gt;3)-[alpha-D-Man-(1-&gt;2)-alpha-D-Man-(1-&gt;6)]-alpha-D-Man-(1-&gt;6)]-beta-D-Man-(1-&gt;4)-beta-D-GlcNAc-(1-&gt;4)-beta-D-GlcNAc)-L-asparaginyl-[protein] (N-glucan mannose isomer 8A1,2,3B1,3) + 3 H2O = N(4)-(alpha-D-Man-(1-&gt;3)-[alpha-D-Man-(1-&gt;3)-[alpha-D-Man-(1-&gt;6)]-alpha-D-Man-(1-&gt;6)]-beta-D-Man-(1-&gt;4)-beta-D-GlcNAc-(1-&gt;4)-beta-D-GlcNAc)-L-asparaginyl-[protein] (N-glucan mannose isomer 5A1,2) + 3 beta-D-mannose. It functions in the pathway protein modification; protein glycosylation. In terms of biological role, involved in the maturation of Asn-linked oligosaccharides. Progressively trims alpha-1,2-linked mannose residues from Man(9)GlcNAc(2) to produce Man(5)GlcNAc(2). In Aspergillus flavus (strain ATCC 200026 / FGSC A1120 / IAM 13836 / NRRL 3357 / JCM 12722 / SRRC 167), this protein is Probable mannosyl-oligosaccharide alpha-1,2-mannosidase 1B (mns1B).